The following is a 299-amino-acid chain: Tetrahydromethanopterin S-methyltransferase subunit E (299 aa).

The next 6 helical transmembrane spans lie at 57–77 (AISGEPVSYGLYVAVAGSVAW), 80–100 (INAGLNAVLALIIGSGVAAIV), 133–153 (IGPIVGHGFIAVFTMVLAAYL), 158–178 (LGNPFPLPLVALIFGITVGAI), 237–257 (GLCFGLIIFLDGWRSIVGNII), and 261–281 (LVTKTSIALVVGLLVVVAAMI).

The protein belongs to the MtrE family. As to quaternary structure, the complex is composed of 8 subunits; MtrA, MtrB, MtrC, MtrD, MtrE, MtrF, MtrG and MtrH.

The protein resides in the cell membrane. The enzyme catalyses 5-methyl-5,6,7,8-tetrahydromethanopterin + coenzyme M + 2 Na(+)(in) = 5,6,7,8-tetrahydromethanopterin + methyl-coenzyme M + 2 Na(+)(out). Its pathway is one-carbon metabolism; methanogenesis from CO(2); methyl-coenzyme M from 5,10-methylene-5,6,7,8-tetrahydromethanopterin: step 2/2. Functionally, part of a complex that catalyzes the formation of methyl-coenzyme M and tetrahydromethanopterin from coenzyme M and methyl-tetrahydromethanopterin. This is an energy-conserving, sodium-ion translocating step. This Methanococcus vannielii (strain ATCC 35089 / DSM 1224 / JCM 13029 / OCM 148 / SB) protein is Tetrahydromethanopterin S-methyltransferase subunit E.